Reading from the N-terminus, the 204-residue chain is Large ribosomal subunit protein eL15 (204 aa).

This sequence belongs to the eukaryotic ribosomal protein eL15 family. Component of the large ribosomal subunit.

It is found in the cytoplasm. In terms of biological role, component of the large ribosomal subunit. The ribosome is a large ribonucleoprotein complex responsible for the synthesis of proteins in the cell. The polypeptide is Large ribosomal subunit protein eL15 (rpl15) (Cyprinus carpio (Common carp)).